The following is a 582-amino-acid chain: Threonine--tRNA ligase (582 aa).

The catalytic stretch occupies residues Asp185–Pro478. Zn(2+) is bound by residues Cys278, His329, and His455.

The protein belongs to the class-II aminoacyl-tRNA synthetase family. Homodimer. The cofactor is Zn(2+).

It is found in the cytoplasm. The catalysed reaction is tRNA(Thr) + L-threonine + ATP = L-threonyl-tRNA(Thr) + AMP + diphosphate + H(+). Catalyzes the attachment of threonine to tRNA(Thr) in a two-step reaction: L-threonine is first activated by ATP to form Thr-AMP and then transferred to the acceptor end of tRNA(Thr). Also edits incorrectly charged L-seryl-tRNA(Thr). The polypeptide is Threonine--tRNA ligase (Dehalococcoides mccartyi (strain CBDB1)).